A 274-amino-acid polypeptide reads, in one-letter code: NADPH-dependent 7-cyano-7-deazaguanine reductase (274 aa).

The segment at 1–33 (MPKKDALDHLSLGQHTDYPNEYDPKQLQPVPRS) is disordered. 84 to 86 (IES) serves as a coordination point for substrate. 86-87 (SK) contacts NADPH. C183 (thioimide intermediate) is an active-site residue. D190 serves as the catalytic Proton donor. 222–223 (HE) contacts substrate. 250 to 251 (RG) is a binding site for NADPH.

This sequence belongs to the GTP cyclohydrolase I family. QueF type 2 subfamily. Homodimer.

It is found in the cytoplasm. It catalyses the reaction 7-aminomethyl-7-carbaguanine + 2 NADP(+) = 7-cyano-7-deazaguanine + 2 NADPH + 3 H(+). It participates in tRNA modification; tRNA-queuosine biosynthesis. Functionally, catalyzes the NADPH-dependent reduction of 7-cyano-7-deazaguanine (preQ0) to 7-aminomethyl-7-deazaguanine (preQ1). In Idiomarina loihiensis (strain ATCC BAA-735 / DSM 15497 / L2-TR), this protein is NADPH-dependent 7-cyano-7-deazaguanine reductase.